The primary structure comprises 123 residues: Large ribosomal subunit protein uL29 (123 aa).

It belongs to the universal ribosomal protein uL29 family. Component of the large ribosomal subunit.

It is found in the cytoplasm. Component of the large ribosomal subunit. The ribosome is a large ribonucleoprotein complex responsible for the synthesis of proteins in the cell. This is Large ribosomal subunit protein uL29 (rpl35) from Hippocampus comes (Tiger tail seahorse).